Reading from the N-terminus, the 452-residue chain is Glycylpeptide N-tetradecanoyltransferase (452 aa).

Tetradecanoyl-CoA-binding positions include 38–41 (YKFW), 171–173 (LCI), and 179–183 (SKRLA). Leucine 452 functions as the Proton acceptor; via carboxylate in the catalytic mechanism.

This sequence belongs to the NMT family. In terms of assembly, monomer.

Its subcellular location is the cytoplasm. It carries out the reaction N-terminal glycyl-[protein] + tetradecanoyl-CoA = N-tetradecanoylglycyl-[protein] + CoA + H(+). Adds a myristoyl group to the N-terminal glycine residue of certain cellular proteins. The sequence is that of Glycylpeptide N-tetradecanoyltransferase (NMT1) from Eremothecium gossypii (strain ATCC 10895 / CBS 109.51 / FGSC 9923 / NRRL Y-1056) (Yeast).